A 78-amino-acid polypeptide reads, in one-letter code: Translational regulator CsrA (78 aa).

This sequence belongs to the CsrA/RsmA family. Homodimer; the beta-strands of each monomer intercalate to form a hydrophobic core, while the alpha-helices form wings that extend away from the core.

The protein resides in the cytoplasm. Functionally, a translational regulator that binds mRNA to regulate translation initiation and/or mRNA stability. Usually binds in the 5'-UTR at or near the Shine-Dalgarno sequence preventing ribosome-binding, thus repressing translation. Its main target seems to be the major flagellin gene, while its function is anatagonized by FliW. The chain is Translational regulator CsrA from Borrelia turicatae (strain 91E135).